Here is a 212-residue protein sequence, read N- to C-terminus: MAIGLIGRKVGMTRIFTEDGVSIPVTVIEATPNRVTQLRTDETDGYTALQVTAGDKKANRVNKAAAGHFAKAGVEAGRGLWEFRLDGNEGEGIEVGSEITVEIFAETKMVDVAGTSKGKGFQGAIKRWNFSHQRNSHGNSLSHRAPGSIGQNQSPGKVFKGKKMAGQMGNKRVTVQSLDVVRVDAENNLLLVRGNVPGAPGGDVIIKAAVKA.

The tract at residues 134-155 (RNSHGNSLSHRAPGSIGQNQSP) is disordered. Gln-153 is modified (N5-methylglutamine).

The protein belongs to the universal ribosomal protein uL3 family. Part of the 50S ribosomal subunit. Forms a cluster with proteins L14 and L19. Post-translationally, methylated by PrmB.

Its function is as follows. One of the primary rRNA binding proteins, it binds directly near the 3'-end of the 23S rRNA, where it nucleates assembly of the 50S subunit. The sequence is that of Large ribosomal subunit protein uL3 from Pseudoalteromonas atlantica (strain T6c / ATCC BAA-1087).